The chain runs to 396 residues: Probable sugar efflux transporter (396 aa).

A run of 12 helical transmembrane segments spans residues 15-35 (VVTL…PVGL), 50-70 (VGIM…PFML), 81-101 (LICL…SWSF), 103-123 (VLVI…SITA), 136-156 (AQAL…GLPL), 170-190 (FFAI…LLPL), 209-229 (PALM…YTAY), 246-266 (FATA…VIFG), 275-295 (ALVS…LPAA), 299-319 (IHLG…GLGM), 333-353 (VAMA…ALVG), and 364-384 (MIGY…IIIF).

The protein belongs to the major facilitator superfamily. SotB (TC 2.A.1.2) family.

It is found in the cell inner membrane. Involved in the efflux of sugars. The physiological role may be the reduction of the intracellular concentration of toxic sugars or sugar metabolites. This chain is Probable sugar efflux transporter, found in Shigella flexneri serotype 5b (strain 8401).